A 313-amino-acid chain; its full sequence is Homoserine O-succinyltransferase (313 aa).

Cys142 acts as the Acyl-thioester intermediate in catalysis. Positions 163 and 192 each coordinate substrate. His235 functions as the Proton acceptor in the catalytic mechanism. Glu237 is an active-site residue. Residue Arg249 coordinates substrate.

Belongs to the MetA family.

Its subcellular location is the cytoplasm. The catalysed reaction is L-homoserine + succinyl-CoA = O-succinyl-L-homoserine + CoA. Its pathway is amino-acid biosynthesis; L-methionine biosynthesis via de novo pathway; O-succinyl-L-homoserine from L-homoserine: step 1/1. Functionally, transfers a succinyl group from succinyl-CoA to L-homoserine, forming succinyl-L-homoserine. This Vibrio parahaemolyticus serotype O3:K6 (strain RIMD 2210633) protein is Homoserine O-succinyltransferase.